We begin with the raw amino-acid sequence, 298 residues long: Ketohexokinase (298 aa).

Residues aspartate 15, glycine 41, asparagine 42, and asparagine 45 each contribute to the beta-D-fructose site. ATP contacts are provided by residues arginine 108, 226 to 229 (AEEG), and 255 to 258 (GAGD). Aspartate 258 contributes to the beta-D-fructose binding site.

Belongs to the carbohydrate kinase PfkB family. In terms of assembly, homodimer.

The enzyme catalyses beta-D-fructose + ATP = beta-D-fructose 1-phosphate + ADP + H(+). The protein operates within carbohydrate metabolism; fructose metabolism. Its activity is regulated as follows. Requires potassium. Inhibition by ADP. In terms of biological role, catalyzes the phosphorylation of the ketose sugar fructose to fructose-1-phosphate. The polypeptide is Ketohexokinase (Mus musculus (Mouse)).